Reading from the N-terminus, the 247-residue chain is Cell division protein ZapD (247 aa).

The protein belongs to the ZapD family. As to quaternary structure, interacts with FtsZ.

Its subcellular location is the cytoplasm. Cell division factor that enhances FtsZ-ring assembly. Directly interacts with FtsZ and promotes bundling of FtsZ protofilaments, with a reduction in FtsZ GTPase activity. In Citrobacter koseri (strain ATCC BAA-895 / CDC 4225-83 / SGSC4696), this protein is Cell division protein ZapD.